Consider the following 782-residue polypeptide: Nucleolar RNA helicase 2 (782 aa).

Residues 1–184 (MPGKLRSASK…IPVEQKEGAF (184 aa)) form a disordered region. Phosphoserine occurs at positions 7 and 13. 2 stretches are compositionally biased toward basic and acidic residues: residues 26–42 (PSEK…KTDE) and 99–117 (EPLE…KAEE). K39 is subject to N6-acetyllysine. A Glycyl lysine isopeptide (Lys-Gly) (interchain with G-Cter in SUMO1); alternate cross-link involves residue K114. K114 participates in a covalent cross-link: Glycyl lysine isopeptide (Lys-Gly) (interchain with G-Cter in SUMO2); alternate. At S119 the chain carries Phosphoserine. A compositionally biased stretch (basic and acidic residues) spans 134–143 (GKEANGDVGE). The residue at position 135 (K135) is an N6-acetyllysine. Residues S145 and S169 each carry the phosphoserine modification. Residues 172-181 (EKEIPVEQKE) show a composition bias toward basic and acidic residues. The short motif at 182–210 (GAFSNFPISEETVKLLKARGVNFLFPIQA) is the Q motif element. The region spanning 213-392 (FHHVYSGKDL…KKYMKSTYEQ (180 aa)) is the Helicase ATP-binding domain. 226-233 (ARTGTGKT) provides a ligand contact to ATP. T292 bears the Phosphothreonine mark. A DEAD box motif is present at residues 335 to 338 (DEVD). A Helicase C-terminal domain is found at 425–569 (DVIRVYSGHQ…GVPSATEIIK (145 aa)). Phosphoserine is present on S563. At K596 the chain carries N6-acetyllysine. Positions 704 to 782 (ATEQPELEGP…KRSFSKAFGQ (79 aa)) are disordered. A run of 3 repeats spans residues 720-724 (GRGQR), 731-735 (FRGQR), and 741-747 (FRGQGQR). Positions 720-747 (GRGQRDGSRGSFRGQRGGSRNFRGQGQR) are 3 X 5 AA repeats. Residues 728-756 (RGSFRGQRGGSRNFRGQGQRGGSRNFRGQ) show a composition bias toward low complexity. K778 carries the post-translational modification N6-acetyllysine.

This sequence belongs to the DEAD box helicase family. DDX21/DDX50 subfamily. In terms of assembly, homodimer; homodimerizes via its N-terminus. Found in a multi-helicase-TICAM1 complex at least composed of DHX36, DDX1, DDX21 and TICAM1; this complex exists in resting cells with or without poly(I:C) RNA ligand stimulation. Interacts (via C-terminus) with TICAM1 (via TIR domain). Interacts with DHX36 (via C-terminus); this interaction serves as bridges to TICAM1. Interacts (via C-terminus) with DDX1 (via B30.2/SPRY domain); this interaction serves as bridges to TICAM1. Component of the B-WICH complex, at least composed of SMARCA5/SNF2H, BAZ1B/WSTF, SF3B1, DEK, MYO1C, ERCC6, MYBBP1A and DDX21. Interacts with C1QBP. Interacts with JUN. Interacts with WDR46. Interacts with MCM3AP. Interacts with WDR43. Interacts with KPNA3. Interacts with GID4. Post-translationally, acetylation by CREBBP/CBP inhibits the helicase activity. Deacetylation by SIRT7 promotes the helicase activity and overcomes R-loop-mediated stalling of RNA polymerases.

Its subcellular location is the nucleus. The protein resides in the nucleolus. It is found in the nucleoplasm. It localises to the cytoplasm. The protein localises to the cytosol. Its subcellular location is the mitochondrion. It catalyses the reaction ATP + H2O = ADP + phosphate + H(+). Acetylation inhibits the helicase activity. Functionally, RNA helicase that acts as a sensor of the transcriptional status of both RNA polymerase (Pol) I and II: promotes ribosomal RNA (rRNA) processing and transcription from polymerase II (Pol II). Binds various RNAs, such as rRNAs, snoRNAs, 7SK and, at lower extent, mRNAs. In the nucleolus, localizes to rDNA locus, where it directly binds rRNAs and snoRNAs, and promotes rRNA transcription, processing and modification. Required for rRNA 2'-O-methylation, possibly by promoting the recruitment of late-acting snoRNAs SNORD56 and SNORD58 with pre-ribosomal complexes. In the nucleoplasm, binds 7SK RNA and is recruited to the promoters of Pol II-transcribed genes: acts by facilitating the release of P-TEFb from inhibitory 7SK snRNP in a manner that is dependent on its helicase activity, thereby promoting transcription of its target genes. Functions as a cofactor for JUN-activated transcription: required for phosphorylation of JUN at 'Ser-77'. Can unwind double-stranded RNA (helicase) and can fold or introduce a secondary structure to a single-stranded RNA (foldase). Together with SIRT7, required to prevent R-loop-associated DNA damage and transcription-associated genomic instability: deacetylation by SIRT7 activates the helicase activity, thereby overcoming R-loop-mediated stalling of RNA polymerases. Involved in rRNA processing. May bind to specific miRNA hairpins. Component of a multi-helicase-TICAM1 complex that acts as a cytoplasmic sensor of viral double-stranded RNA (dsRNA) and plays a role in the activation of a cascade of antiviral responses including the induction of pro-inflammatory cytokines via the adapter molecule TICAM1. This chain is Nucleolar RNA helicase 2 (Ddx21), found in Rattus norvegicus (Rat).